The sequence spans 618 residues: UvrABC system protein C (618 aa).

One can recognise a GIY-YIG domain in the interval 20-98; sequence TAPGVYRMYA…IKSLSPRYNV (79 aa). The UVR domain maps to 207–242; the sequence is DQLGEEIMHSMQQASEALEFERAARLRDLLSSLRSM.

It belongs to the UvrC family. In terms of assembly, interacts with UvrB in an incision complex.

It localises to the cytoplasm. The UvrABC repair system catalyzes the recognition and processing of DNA lesions. UvrC both incises the 5' and 3' sides of the lesion. The N-terminal half is responsible for the 3' incision and the C-terminal half is responsible for the 5' incision. This chain is UvrABC system protein C, found in Xanthomonas campestris pv. campestris (strain 8004).